Here is a 363-residue protein sequence, read N- to C-terminus: NAD(P)H-quinone oxidoreductase subunit 1, chloroplastic (363 aa).

8 helical membrane-spanning segments follow: residues 30–50 (LVPI…IVWL), 98–118 (FSIG…VIPF), 127–147 (LSIG…GLLM), 165–185 (AAQS…ISLL), 203–223 (FWGW…ISSL), 248–268 (YSGI…LVSS), 300–320 (VFGT…FLFI), and 336–356 (LLNL…LLTT).

It belongs to the complex I subunit 1 family. As to quaternary structure, NDH is composed of at least 16 different subunits, 5 of which are encoded in the nucleus.

It is found in the plastid. The protein localises to the chloroplast thylakoid membrane. The catalysed reaction is a plastoquinone + NADH + (n+1) H(+)(in) = a plastoquinol + NAD(+) + n H(+)(out). It catalyses the reaction a plastoquinone + NADPH + (n+1) H(+)(in) = a plastoquinol + NADP(+) + n H(+)(out). Functionally, NDH shuttles electrons from NAD(P)H:plastoquinone, via FMN and iron-sulfur (Fe-S) centers, to quinones in the photosynthetic chain and possibly in a chloroplast respiratory chain. The immediate electron acceptor for the enzyme in this species is believed to be plastoquinone. Couples the redox reaction to proton translocation, and thus conserves the redox energy in a proton gradient. In Solanum bulbocastanum (Wild potato), this protein is NAD(P)H-quinone oxidoreductase subunit 1, chloroplastic.